We begin with the raw amino-acid sequence, 311 residues long: Transcription factor BIM2 (311 aa).

Disordered regions lie at residues Met1–Lys60 and Ala271–Leu311. Basic and acidic residues-rich tracts occupy residues Ser33 to Ser44 and Ser51 to Lys60. In terms of domain architecture, bHLH spans Ala45 to Leu95.

As to quaternary structure, homodimer. Interacts with the N-terminus of BZR2/BES1. As to expression, expressed constitutively in roots, leaves, stems, and flowers.

It localises to the nucleus. Functionally, positive brassinosteroid-signaling protein. This chain is Transcription factor BIM2 (BIM2), found in Arabidopsis thaliana (Mouse-ear cress).